Consider the following 44-residue polypeptide: Thymosin beta-4 (44 aa).

The tract at residues 1–44 (MSDKPDMGEIQKFNKSKLKKTETQEKNPLPSKETIEQEKQAGES) is disordered. Ser2 carries the post-translational modification N-acetylserine. Ser2 is modified (phosphoserine). The residue at position 4 (Lys4) is an N6-acetyllysine. Lys12 is modified (N6-acetyllysine; alternate). Residue Lys12 forms a Glycyl lysine isopeptide (Lys-Gly) (interchain with G-Cter in SUMO2); alternate linkage. At Thr23 the chain carries Phosphothreonine. Lys26 is subject to N6-acetyllysine. Ser31 carries the phosphoserine modification. Lys32 carries the N6-acetyllysine modification. Over residues 33 to 44 (ETIEQEKQAGES) the composition is skewed to basic and acidic residues. Thr34 is subject to Phosphothreonine. Position 39 is an N6-acetyllysine (Lys39).

It belongs to the thymosin beta family. As to quaternary structure, identified in a complex composed of ACTA1, COBL, GSN AND TMSB4X. Interacts with SERPINB1. AcSDKP is inactivated by ACE, which removes the dipeptide Lys-Pro from its C-terminus.

The protein localises to the cytoplasm. It localises to the cytoskeleton. Plays an important role in the organization of the cytoskeleton. Binds to and sequesters actin monomers (G actin) and therefore inhibits actin polymerization. In terms of biological role, potent inhibitor of bone marrow derived stem cell differentiation. Acts by inhibits the entry of hematopoietic pluripotent stem cells into the S-phase. The chain is Thymosin beta-4 (TMSB4) from Notamacropus eugenii (Tammar wallaby).